Here is a 312-residue protein sequence, read N- to C-terminus: Glyoxylate/hydroxypyruvate reductase A (312 aa).

The active site involves Arg227. His275 functions as the Proton donor in the catalytic mechanism.

The protein belongs to the D-isomer specific 2-hydroxyacid dehydrogenase family. GhrA subfamily.

Its subcellular location is the cytoplasm. It catalyses the reaction glycolate + NADP(+) = glyoxylate + NADPH + H(+). It carries out the reaction (R)-glycerate + NAD(+) = 3-hydroxypyruvate + NADH + H(+). The enzyme catalyses (R)-glycerate + NADP(+) = 3-hydroxypyruvate + NADPH + H(+). Functionally, catalyzes the NADPH-dependent reduction of glyoxylate and hydroxypyruvate into glycolate and glycerate, respectively. Inactive towards 2-oxo-D-gluconate, 2-oxoglutarate, oxaloacetate and pyruvate. Only D- and L-glycerate are involved in the oxidative activity with NADP. Activity with NAD is very low. The chain is Glyoxylate/hydroxypyruvate reductase A (ghrA) from Escherichia coli (strain K12).